Consider the following 294-residue polypeptide: Indole-3-glycerol phosphate synthase (294 aa).

The protein belongs to the TrpC family.

It carries out the reaction 1-(2-carboxyphenylamino)-1-deoxy-D-ribulose 5-phosphate + H(+) = (1S,2R)-1-C-(indol-3-yl)glycerol 3-phosphate + CO2 + H2O. It participates in amino-acid biosynthesis; L-tryptophan biosynthesis; L-tryptophan from chorismate: step 4/5. In Synechococcus sp. (strain CC9902), this protein is Indole-3-glycerol phosphate synthase.